We begin with the raw amino-acid sequence, 124 residues long: Small ribosomal subunit protein uS13 (124 aa).

The segment at 95 to 124 (GLPVRGQRTKTNARTRKGPKRTVAGKKKAR) is disordered.

Belongs to the universal ribosomal protein uS13 family. In terms of assembly, part of the 30S ribosomal subunit. Forms a loose heterodimer with protein S19. Forms two bridges to the 50S subunit in the 70S ribosome.

Its function is as follows. Located at the top of the head of the 30S subunit, it contacts several helices of the 16S rRNA. In the 70S ribosome it contacts the 23S rRNA (bridge B1a) and protein L5 of the 50S subunit (bridge B1b), connecting the 2 subunits; these bridges are implicated in subunit movement. Contacts the tRNAs in the A and P-sites. This chain is Small ribosomal subunit protein uS13, found in Leifsonia xyli subsp. xyli (strain CTCB07).